The following is a 621-amino-acid chain: ATP-dependent lipid A-core flippase (621 aa).

5 consecutive transmembrane segments (helical) span residues 32 to 52, 91 to 111, 192 to 212, 286 to 306, and 312 to 332; these read IVAALIAIFGVAATESYLAAF, VWGTENKIWTVPLFLIILVVI, IVLLYLNWQLSLIVVLMFPLL, SPFSELIASIALAVVIFIALW, and YTTIGEFMAFIVAMLQMYAPI. In terms of domain architecture, ABC transmembrane type-1 spans 33–344; the sequence is VAALIAIFGV…LANISIPMQT (312 aa). The 234-residue stretch at 378-611 folds into the ABC transporter domain; it reads FRNVDVEYRS…NGYYTMLRNI (234 aa). An ATP-binding site is contributed by 410–417; the sequence is GRSGSGKS.

It belongs to the ABC transporter superfamily. Lipid exporter (TC 3.A.1.106) family. As to quaternary structure, homodimer.

Its subcellular location is the cell inner membrane. It carries out the reaction ATP + H2O + lipid A-core oligosaccharideSide 1 = ADP + phosphate + lipid A-core oligosaccharideSide 2.. In terms of biological role, involved in lipopolysaccharide (LPS) biosynthesis. Translocates lipid A-core from the inner to the outer leaflet of the inner membrane. Transmembrane domains (TMD) form a pore in the inner membrane and the ATP-binding domain (NBD) is responsible for energy generation. The polypeptide is ATP-dependent lipid A-core flippase (Neisseria meningitidis serogroup A / serotype 4A (strain DSM 15465 / Z2491)).